We begin with the raw amino-acid sequence, 104 residues long: Large ribosomal subunit protein uL23 (104 aa).

This sequence belongs to the universal ribosomal protein uL23 family. In terms of assembly, part of the 50S ribosomal subunit. Contacts protein L29, and trigger factor when it is bound to the ribosome.

Functionally, one of the early assembly proteins it binds 23S rRNA. One of the proteins that surrounds the polypeptide exit tunnel on the outside of the ribosome. Forms the main docking site for trigger factor binding to the ribosome. This is Large ribosomal subunit protein uL23 from Nostoc sp. (strain PCC 7120 / SAG 25.82 / UTEX 2576).